Here is a 70-residue protein sequence, read N- to C-terminus: U2-agatoxin-Ao1n (70 aa).

The first 20 residues, 1 to 20 (MRAIISLLLISAMVFYIIAA), serve as a signal peptide directing secretion. The propeptide occupies 21–34 (VPEEEGLQLSEDER). Intrachain disulfides connect Cys37/Cys53, Cys44/Cys58, and Cys52/Cys68. Leu69 bears the Leucine amide mark.

Belongs to the neurotoxin 01 (U2-agtx) family. As to expression, expressed by the venom gland.

Its subcellular location is the secreted. Insect active toxin causing rapid but reversible paralysis in crickets. No activity shown in mammals. Does not show effect on mammalian voltage-gated calcium channels. The polypeptide is U2-agatoxin-Ao1n (Agelena orientalis (Funnel-web spider)).